The primary structure comprises 116 residues: U11-theraphotoxin-Hhn1b (116 aa).

Residues 1 to 21 (MNTVRVTFLLVFVLAVSLGQA) form the signal peptide. The propeptide occupies 22–74 (DKDENRMEMQEKTEQGKSYLDFAENLLLQKLEELEAKLLEEDSEESRNSRQKR). A compositionally biased stretch (basic and acidic residues) spans 60 to 69 (LEEDSEESRN). The interval 60–83 (LEEDSEESRNSRQKRCIGEGVPCD) is disordered. Intrachain disulfides connect Cys75–Cys90, Cys82–Cys95, and Cys89–Cys110.

It belongs to the neurotoxin 14 (magi-1) family. 01 (HNTX-16) subfamily. Expressed by the venom gland.

It is found in the secreted. In terms of biological role, probable ion channel inhibitor. The polypeptide is U11-theraphotoxin-Hhn1b (Cyriopagopus hainanus (Chinese bird spider)).